Here is a 679-residue protein sequence, read N- to C-terminus: MSKQEAVSELTKQQAQAELTPLREQLKKWGAEYYEQDNPSVEDYVYDRAYQRLVEIEQRFPDLVVPDSPTQRVGGAAESQLNKVTHEIPMLSMGDVFSLAELADFNRRQQDNSDVKVDFDYNLELKIDGLSLSLVYENGRLVQGSTRGNGTIGEDVTENVKTIKSIPQVLPEPLSLEFRGECYMPKEAFVKLNERREAEGQPVFANPRNAAAGSLRQLDPKVTAARQLDTFMYYVPDYQALGVTTQAQALEKMRALGFAVNPNYRVVHSQAELTAYIEEYTKKRDQLPYGIDGIVEKVNDLATQVALGNTVKVPRWEIAYKFPPEEQATVVRDIEWTVGRTGNVTPTAVMDPVQLAGTTVSRASLHNPDYLVEKDIRLGDTVLLHKAGDIIPEISRVIIEKRPADSKPYEVPTTCPECGADLVHLDDEVALRCVNPMCPAQIKEGLAHFASRNAMNIDGLGPKIIEQLWDKGMVKDVADLYRLEAAQLLTLPKFGEKSISNLLTAIANSRHNSCERLLFGLGIRHVGAKVAQLLAAEFKSVDALMAADAATISAVDSIGPIIGDAVATYFQNEQVHQLIAELKEVGVNMDYLAPTTSATESAEWAGKRVVLTGKLTKMTRGQAQEWLSARGASVTGSVSKKTDLLIAGEKAGSKLEKAQTLGIEVWDEDRFDQAMKEEN.

Residues 43 to 47, 92 to 93, and Glu124 each bind NAD(+); these read DYVYD and SM. Lys126 (N6-AMP-lysine intermediate) is an active-site residue. The NAD(+) site is built by Arg147, Glu181, Lys297, and Lys321. The Zn(2+) site is built by Cys415, Cys418, Cys433, and Cys438. Residues 599 to 679 enclose the BRCT domain; that stretch reads TESAEWAGKR…RFDQAMKEEN (81 aa).

The protein belongs to the NAD-dependent DNA ligase family. LigA subfamily. The cofactor is Mg(2+). Mn(2+) is required as a cofactor.

The enzyme catalyses NAD(+) + (deoxyribonucleotide)n-3'-hydroxyl + 5'-phospho-(deoxyribonucleotide)m = (deoxyribonucleotide)n+m + AMP + beta-nicotinamide D-nucleotide.. DNA ligase that catalyzes the formation of phosphodiester linkages between 5'-phosphoryl and 3'-hydroxyl groups in double-stranded DNA using NAD as a coenzyme and as the energy source for the reaction. It is essential for DNA replication and repair of damaged DNA. This chain is DNA ligase, found in Limosilactobacillus fermentum (strain NBRC 3956 / LMG 18251) (Lactobacillus fermentum).